The primary structure comprises 881 residues: Serine/threonine-protein kinase/endoribonuclease IRE1b (881 aa).

Residues 1–21 (MRGSALLDLILFLLVSPLAHS) form the signal peptide. The Lumenal portion of the chain corresponds to 22-357 (FKGSEISKFY…KQAGFASKFS (336 aa)). Asn115 carries N-linked (GlcNAc...) asparagine glycosylation. A helical membrane pass occupies residues 358–378 (GLIVLIFGFCVTMLSVCGLFF). Residues 379-881 (YRLRQSIRIK…FFKYSKTTVF (503 aa)) lie on the Cytoplasmic side of the membrane. A Protein kinase domain is found at 459-744 (FVSNKEIAKG…AQDVMHHPLF (286 aa)). ATP-binding positions include 465 to 473 (IAKGSNGTV) and Lys487. An ATP selon article region spans residues 481–502 (GRLVAVKRLVQSHHDVAQKEIL). Residue Asp608 is the Proton acceptor of the active site. The tract at residues 642–661 (LTRNSTGLGSGSSGWQAPEQ) is disordered. The region spanning 747-878 (SDMRLSFLRD…EEFFFKYSKT (132 aa)) is the KEN domain.

This sequence belongs to the protein kinase superfamily. Ser/Thr protein kinase family. Homodimer; disulfide-linked. Dimer formation is driven by hydrophobic interactions within the N-terminal luminal domains and stabilized by disulfide bridges. It depends on Mg(2+) as a cofactor. Autophosphorylated. As to expression, ubiquitous. Detected in the apical meristem, at leaf margins where vascular bundles end, in the anthers before pollen is formed and in the ovules at a very early stage of development. There is no expression in more mature embryos. Also strongly expressed in the cotyledons immediately after germination but not later on.

The protein resides in the endoplasmic reticulum membrane. The enzyme catalyses L-seryl-[protein] + ATP = O-phospho-L-seryl-[protein] + ADP + H(+). It carries out the reaction L-threonyl-[protein] + ATP = O-phospho-L-threonyl-[protein] + ADP + H(+). Its activity is regulated as follows. The kinase domain is activated by trans-autophosphorylation. Kinase activity is required for activation of the endoribonuclease domain. Its function is as follows. Senses unfolded proteins in the lumen of the endoplasmic reticulum via its N-terminal domain which leads to enzyme auto-activation. The active endoribonuclease domain splices bZIP60 mRNA to generate a new C-terminus, converting it into a potent unfolded-protein response transcriptional activator which then induces transcription of UPR target genes. Involved in organ growth regulation. Plays a role in plant immunity and abiotic stress responses. Required for ER stress-induced autophagy. The chain is Serine/threonine-protein kinase/endoribonuclease IRE1b (IRE1B) from Arabidopsis thaliana (Mouse-ear cress).